Reading from the N-terminus, the 101-residue chain is UPF0235 protein MmarC5_0538 (101 aa).

It belongs to the UPF0235 family.

The protein is UPF0235 protein MmarC5_0538 of Methanococcus maripaludis (strain C5 / ATCC BAA-1333).